Consider the following 43-residue polypeptide: Protein PsbN (43 aa).

The chain crosses the membrane as a helical span at residues 5-27 (TLVXISISGSLVSFTGYALYTAF).

Belongs to the PsbN family.

The protein resides in the plastid. It localises to the chloroplast thylakoid membrane. In terms of biological role, may play a role in photosystem I and II biogenesis. This chain is Protein PsbN, found in Calycanthus floridus (Eastern sweetshrub).